Consider the following 745-residue polypeptide: Elongation factor G, mitochondrial (745 aa).

Residues 40–317 form the tr-type G domain; that stretch reads ERIRNIGISA…AVLDYLPNPG (278 aa). GTP is bound by residues 49–56, 116–120, and 170–173; these read AHIDSGKT, DTPGH, and NKLD.

Belongs to the TRAFAC class translation factor GTPase superfamily. Classic translation factor GTPase family. EF-G/EF-2 subfamily.

The protein localises to the mitochondrion. Its pathway is protein biosynthesis; polypeptide chain elongation. In terms of biological role, mitochondrial GTPase that catalyzes the GTP-dependent ribosomal translocation step during translation elongation. During this step, the ribosome changes from the pre-translocational (PRE) to the post-translocational (POST) state as the newly formed A-site-bound peptidyl-tRNA and P-site-bound deacylated tRNA move to the P and E sites, respectively. Catalyzes the coordinated movement of the two tRNA molecules, the mRNA and conformational changes in the ribosome. Essential during development as it acts as a retrograde signal from mitochondria to the nucleus to slow down cell proliferation if mitochondrial energy output is low. The protein is Elongation factor G, mitochondrial of Drosophila sechellia (Fruit fly).